We begin with the raw amino-acid sequence, 612 residues long: Proton pump-interactor 1 (612 aa).

Residues 1–58 form a disordered region; it reads MGVEVVNSGGFEVAPAPFEGKPEKNGKLDQGKGDDAPINFGSVGELPKNAEENNNKVV. The span at 20-35 shows a compositional bias: basic and acidic residues; the sequence is GKPEKNGKLDQGKGDD. 2 coiled-coil regions span residues 90 to 113 and 251 to 314; these read PKIKAKLDLADKELEKLNKARTGV and LDGV…NSEY. Basic and acidic residues-rich tracts occupy residues 374–387, 434–446, 459–498, and 505–519; these read LSRDGRMRNPDEKP, EKAKDAVKVKNVA, PQKEEKPVDAATAKEMRKQEEIAKAKQAMERKKKLAEKAA, and AQKEAEKKEKKEQEK. Residues 374–572 form a disordered region; that stretch reads LSRDGRMRNP…PIRNRTRGRG (199 aa). Residues 466–526 are a coiled coil; that stretch reads VDAATAKEMR…QEKKAKKKTG (61 aa). Residues 531–545 show a composition bias toward acidic residues; that stretch reads TETEEVPEASEEEIE. Ser-540 is subject to Phosphoserine. Basic and acidic residues predominate over residues 549–564; it reads QEEKPQKEKVFKEKPI. A helical transmembrane segment spans residues 591–611; it reads VYAAPAALVVLLLLVLGYYYV.

The protein belongs to the plant Proton pump-interactor protein family. As to quaternary structure, interacts with AHA1 via N-terminal region. Strongly expressed in root and shoot vascular systems, particularly in meristematic and sink tissues. Also present in pollen, stigmas and siliques, but not in developing embryos.

It localises to the cell membrane. Its subcellular location is the endoplasmic reticulum membrane. Promotes AHA1 plasma membrane ATPase activity by binding to a site different from the 14-3-3 binding site. This is Proton pump-interactor 1 (PPI1) from Arabidopsis thaliana (Mouse-ear cress).